Reading from the N-terminus, the 166-residue chain is Large ribosomal subunit protein uL11 (166 aa).

The protein belongs to the universal ribosomal protein uL11 family.

In Dictyostelium discoideum (Social amoeba), this protein is Large ribosomal subunit protein uL11 (rpl12).